Here is a 425-residue protein sequence, read N- to C-terminus: Succinyl-diaminopimelate desuccinylase (425 aa).

Zn(2+) is bound at residue H96. D98 is an active-site residue. D129 serves as a coordination point for Zn(2+). The active-site Proton acceptor is the E163. Zn(2+)-binding residues include E164, E192, and H378.

Belongs to the peptidase M20A family. DapE subfamily. In terms of assembly, homodimer. Zn(2+) serves as cofactor. Requires Co(2+) as cofactor.

It carries out the reaction N-succinyl-(2S,6S)-2,6-diaminopimelate + H2O = (2S,6S)-2,6-diaminopimelate + succinate. It participates in amino-acid biosynthesis; L-lysine biosynthesis via DAP pathway; LL-2,6-diaminopimelate from (S)-tetrahydrodipicolinate (succinylase route): step 3/3. Functionally, catalyzes the hydrolysis of N-succinyl-L,L-diaminopimelic acid (SDAP), forming succinate and LL-2,6-diaminopimelate (DAP), an intermediate involved in the bacterial biosynthesis of lysine and meso-diaminopimelic acid, an essential component of bacterial cell walls. In Polaromonas sp. (strain JS666 / ATCC BAA-500), this protein is Succinyl-diaminopimelate desuccinylase.